Here is a 301-residue protein sequence, read N- to C-terminus: tRNA pseudouridine synthase B (301 aa).

The active-site Nucleophile is the aspartate 45.

This sequence belongs to the pseudouridine synthase TruB family. Type 1 subfamily.

It catalyses the reaction uridine(55) in tRNA = pseudouridine(55) in tRNA. Functionally, responsible for synthesis of pseudouridine from uracil-55 in the psi GC loop of transfer RNAs. This Streptomyces avermitilis (strain ATCC 31267 / DSM 46492 / JCM 5070 / NBRC 14893 / NCIMB 12804 / NRRL 8165 / MA-4680) protein is tRNA pseudouridine synthase B.